Here is a 426-residue protein sequence, read N- to C-terminus: Dihydroorotase (426 aa).

2 residues coordinate Zn(2+): His-58 and His-60. Residues 60 to 62 and Asn-92 contribute to the substrate site; that span reads HLR. Residues Asp-150, His-177, and His-230 each contribute to the Zn(2+) site. Asn-276 serves as a coordination point for substrate. Residue Asp-303 participates in Zn(2+) binding. Asp-303 is an active-site residue. Substrate contacts are provided by residues His-307 and 321–322; that span reads FG.

The protein belongs to the metallo-dependent hydrolases superfamily. DHOase family. Class I DHOase subfamily. Requires Zn(2+) as cofactor.

It carries out the reaction (S)-dihydroorotate + H2O = N-carbamoyl-L-aspartate + H(+). It functions in the pathway pyrimidine metabolism; UMP biosynthesis via de novo pathway; (S)-dihydroorotate from bicarbonate: step 3/3. Catalyzes the reversible cyclization of carbamoyl aspartate to dihydroorotate. This is Dihydroorotase from Listeria welshimeri serovar 6b (strain ATCC 35897 / DSM 20650 / CCUG 15529 / CIP 8149 / NCTC 11857 / SLCC 5334 / V8).